Here is a 386-residue protein sequence, read N- to C-terminus: Succinate--CoA ligase [ADP-forming] subunit beta (386 aa).

The 229-residue stretch at 9–237 (KEVLRDFGVN…LSAEHPLEVE (229 aa)) folds into the ATP-grasp domain. ATP contacts are provided by residues Lys45, 52-54 (GRG), Val94, and Glu101. The Mg(2+) site is built by Asn192 and Asp206. Residues Asn258 and 315–317 (GIT) contribute to the substrate site.

Belongs to the succinate/malate CoA ligase beta subunit family. As to quaternary structure, heterotetramer of two alpha and two beta subunits. It depends on Mg(2+) as a cofactor.

It catalyses the reaction succinate + ATP + CoA = succinyl-CoA + ADP + phosphate. It carries out the reaction GTP + succinate + CoA = succinyl-CoA + GDP + phosphate. It functions in the pathway carbohydrate metabolism; tricarboxylic acid cycle; succinate from succinyl-CoA (ligase route): step 1/1. Its function is as follows. Succinyl-CoA synthetase functions in the citric acid cycle (TCA), coupling the hydrolysis of succinyl-CoA to the synthesis of either ATP or GTP and thus represents the only step of substrate-level phosphorylation in the TCA. The beta subunit provides nucleotide specificity of the enzyme and binds the substrate succinate, while the binding sites for coenzyme A and phosphate are found in the alpha subunit. The polypeptide is Succinate--CoA ligase [ADP-forming] subunit beta (Deinococcus radiodurans (strain ATCC 13939 / DSM 20539 / JCM 16871 / CCUG 27074 / LMG 4051 / NBRC 15346 / NCIMB 9279 / VKM B-1422 / R1)).